The primary structure comprises 607 residues: Elongation factor 4 (607 aa).

The region spanning 6-188 (DRIRNFSIIA…AIVARIPAPK (183 aa)) is the tr-type G domain. GTP is bound by residues 18–23 (DHGKST) and 135–138 (NKID).

Belongs to the TRAFAC class translation factor GTPase superfamily. Classic translation factor GTPase family. LepA subfamily.

The protein resides in the cell inner membrane. The catalysed reaction is GTP + H2O = GDP + phosphate + H(+). Required for accurate and efficient protein synthesis under certain stress conditions. May act as a fidelity factor of the translation reaction, by catalyzing a one-codon backward translocation of tRNAs on improperly translocated ribosomes. Back-translocation proceeds from a post-translocation (POST) complex to a pre-translocation (PRE) complex, thus giving elongation factor G a second chance to translocate the tRNAs correctly. Binds to ribosomes in a GTP-dependent manner. This is Elongation factor 4 from Rhizorhabdus wittichii (strain DSM 6014 / CCUG 31198 / JCM 15750 / NBRC 105917 / EY 4224 / RW1) (Sphingomonas wittichii).